We begin with the raw amino-acid sequence, 2813 residues long: von Willebrand factor (2813 aa).

Residues 1 to 22 (MIPARFAGVLLALALILPGTLC) form the signal peptide. Positions 33-201 (ARCSLFGSDF…ALSSGEQWCE (169 aa)) constitute a VWFD 1 domain. Disulfide bonds link C35–C162 and C57–C200. N99, N156, and N211 each carry an N-linked (GlcNAc...) asparagine glycan. Positions 295 to 348 (CPAGMEYRQCVSPCARTCQSLHINEMCQERCVDGCSCPEGQLLDEGLCVESTEC) constitute a TIL 1 domain. The VWFD 2 domain maps to 386-560 (GECLVTGQSH…NAWKLHGDCQ (175 aa)). Cystine bridges form between C388–C524, C410–C559, and C432–C440. 2 TIL domains span residues 652–707 (CPKG…KAQC) and 776–827 (CPAD…LERC). The N-linked (GlcNAc...) asparagine glycan is linked to N666. Residues 764–787 (SLSCRPPMVKLVCPADNLRAEGLE) are amino-terminal. 3 cysteine pairs are disulfide-bonded: C767/C808, C776/C804, and C810/C821. Residues 788–833 (CTKTCQNYDLECMSMGCVSGCLCPPGMVRHENRCVALERCPCFHQG) form an E1 region. The interval 826–853 (RCPCFHQGKEYAPGETVKIGCNTCVCQD) is CX. An N-linked (GlcNAc...) asparagine glycan is attached at N857. A VWFD 3 domain is found at 865 to 1032 (ATCSTIGMAH…NSWKVSSQCA (168 aa)). 8 disulfides stabilise this stretch: C867–C996, C889–C1031, C898–C993, C914–C921, C1060–C1084, C1071–C1111, C1089–C1091, and C1126–C1130. In terms of domain architecture, TIL 4 spans 1146–1196 (YNSCAPACQVTCQHPEPLACPVQCVEGCHAHCPPGKILDELLQTCVDPEDC). N1147 carries N-linked (GlcNAc...) asparagine; atypical glycosylation. 3 disulfides stabilise this stretch: C1149–C1169, C1153–C1165, and C1196–C1199. N1231 carries an N-linked (GlcNAc...) asparagine glycan. C1234 and C1237 are oxidised to a cystine. Residues T1248, T1255, and T1256 are each glycosylated (O-linked (GalNAc...) threonine). Residue S1263 is glycosylated (O-linked (GalNAc...) serine). Residues C1272 and C1458 are joined by a disulfide bond. The VWFA 1; binding site for platelet glycoprotein Ib domain occupies 1277 to 1453 (DLVFLLDGSS…DELEQQRDEI (177 aa)). O-linked (GalNAc...) threonine glycosylation is found at T1468 and T1477. O-linked (GalNAc...) serine glycosylation occurs at S1486. T1487 is a glycosylation site (O-linked (GalNAc...) threonine). One can recognise a VWFA 2 domain in the interval 1498-1665 (DVAFVLEGSD…TLPREAPDLV (168 aa)). N1515 carries N-linked (GlcNAc...) (complex) asparagine glycosylation. Residue N1574 is glycosylated (N-linked (GlcNAc...) asparagine). A disulfide bridge links C1669 with C1670. Residue T1679 is glycosylated (O-linked (GalNAc...) threonine). 7 disulfides stabilise this stretch: C1686/C1872, C1879/C1904, C1899/C1940, C1927/C2088, C1950/C2085, C1972/C2123, and C1993/C2001. The 181-residue stretch at 1691-1871 (DVILLLDGSS…TLGNSFLHKL (181 aa)) folds into the VWFA 3; main binding site for collagens type I and III domain. One can recognise a VWFD 4 domain in the interval 1948–2124 (CVCTGSSTRH…TVQRPGQTCQ (177 aa)). The interval 2216–2261 (CPRHCDGNVSSCGDHPSEGCFCPPDKVMLEGSCVPEEACTQCIGED) is E2. N-linked (GlcNAc...) asparagine glycosylation is found at N2223 and N2290. The 74-residue stretch at 2255–2328 (TQCIGEDGVQ…CCPEYECVCD (74 aa)) folds into the VWFC 1 domain. T2298 carries O-linked (GalNAc...) threonine glycosylation. Residues N2357 and N2400 are each glycosylated (N-linked (GlcNAc...) asparagine). In terms of domain architecture, VWFC 2 spans 2429–2495 (KVCVHRSTIY…HEGECCGRCL (67 aa)). The Cell attachment site signature appears at 2507–2509 (RGD). N-linked (GlcNAc...) asparagine glycosylation is found at N2546 and N2585. Positions 2580–2645 (EACMLNGTVI…NTGECCGRCL (66 aa)) constitute a VWFC 3 domain. Intrachain disulfides connect C2724/C2774, C2739/C2788, C2750/C2804, and C2754/C2806. Residues 2724 to 2812 (CNDITARLQY…ECKCSPRKCS (89 aa)) form the CTCK domain. A glycan (N-linked (GlcNAc...) asparagine) is linked at N2790.

In terms of assembly, multimeric. Interacts with F8. Post-translationally, all cysteine residues are involved in intrachain or interchain disulfide bonds. In terms of processing, N- and O-glycosylated. Plasma.

Its subcellular location is the secreted. The protein localises to the extracellular space. The protein resides in the extracellular matrix. Functionally, important in the maintenance of hemostasis, it promotes adhesion of platelets to the sites of vascular injury by forming a molecular bridge between sub-endothelial collagen matrix and platelet-surface receptor complex GPIb-IX-V. Also acts as a chaperone for coagulation factor VIII, delivering it to the site of injury, stabilizing its heterodimeric structure and protecting it from premature clearance from plasma. This chain is von Willebrand factor (VWF), found in Homo sapiens (Human).